The primary structure comprises 632 residues: MSHIMNLLVISFVLAGSSWSLLGYQDDFSSKRSGALASNPTYNLPQDKGYGRDMYQPYYICEPDNDGSALTLPSWHYSCKESCMGNHLKRVVNITGARWNYVGISIPVFKIVTNEVCYTSHENVWGYCSQYQISRPVATQKSDVSCITSSMWDNDKSPIGSLYNIVNSNEAECDYFSDITDCNRDYQIFKREGKLIKRSDDSPLELSIVTDGIRTDPASEYLSLDDVSWFWKLPNNDMSPPCGWEKTQKLSCSYTDTTDVIKCNSIGYTYNIQGISKKSTCAGNIYDTDGPFPFFYDAEEALMSTDDACGKAKQGKPDADIAFIEGVNRAFEDLELTYCSATCDLFARQGTPNEDHVLDTPIGTWRYVMRDNLDPALVPCLPTSNWTISDPTTICHGKDHILVVDTATGHSGSWDTKKDYIITGEVCNTNNDEMGDDYDGMRDKILRGETIEIKFWTGDIIRMAPPYDNPEWIKGSVLFRQNPGWFSSVELNKDMIHTRDNITDLLTVMVQNATAEVMYKRLDPKTMKHILFAEIVDGVGNVSGKISGFLTGLFGGFTKAVIIVASLAICYIVLSVLWKVRLVASIFNSAKKKRVRISDILDEEPHRIQQSRPTLSRKKKTRESIQMLLNDI.

The first 17 residues, 1-17 (MSHIMNLLVISFVLAGS), serve as a signal peptide directing secretion. 5 N-linked (GlcNAc...) asparagine; by host glycosylation sites follow: Asn-93, Asn-385, Asn-501, Asn-512, and Asn-541. Residues 560–578 (AVIIVASLAICYIVLSVLW) traverse the membrane as a helical segment.

The protein belongs to the nucleorhabdovirus glycoprotein family.

The protein resides in the virion membrane. In terms of biological role, this protein forms spikes on the surface of the virion. It is responsible both for the binding of the virus to susceptible host cells and for inducing the uptake of the virus by the cell. The interaction between the internal components of the virion and the portion of the glycoprotein exposed on the cytoplasmic face of the plasma membrane probably directs envelopment and virus budding. The polypeptide is Spike glycoprotein (G) (Aphis (Hairy beggarticks)).